The sequence spans 252 residues: Protein AGAMOUS-LIKE 6 (252 aa).

Residues 1–61 (MGRGRVELKR…GKLYEFGSAG (61 aa)) form the MADS-box domain. Short sequence motifs (nuclear localization signal) lie at residues 8–15 (LKRIENKI) and 138–145 (QRKTQIMM). Positions 85–175 (TQSWYQEVSK…KIKVSLELSS (91 aa)) constitute a K-box domain.

In terms of tissue distribution, restricted to flowers.

It is found in the nucleus. Functionally, probable transcription factor involved in fruit development. Key regulator of the transition between the state of 'ovary arrest' imposed towards anthesis and the fertilization-triggered fruit set. In Solanum lycopersicum (Tomato), this protein is Protein AGAMOUS-LIKE 6.